Reading from the N-terminus, the 336-residue chain is Foldase protein PrsA (336 aa).

Residues 1–22 form the signal peptide; the sequence is MKSAKKLLSVLCLGIFILTFTA. A lipid anchor (N-palmitoyl cysteine) is attached at C23. Residue C23 is the site of S-diacylglycerol cysteine attachment. Residues 194–286 enclose the PpiC domain; that stretch reads PNTMNVSHIL…WGYHIIKVNS (93 aa).

Belongs to the PrsA family.

The protein resides in the cell membrane. The enzyme catalyses [protein]-peptidylproline (omega=180) = [protein]-peptidylproline (omega=0). In terms of biological role, plays a major role in protein secretion by helping the post-translocational extracellular folding of several secreted proteins. In Clostridium botulinum (strain ATCC 19397 / Type A), this protein is Foldase protein PrsA.